The chain runs to 275 residues: Putative Ig-like V-type domain-containing protein FPV055 (275 aa).

2 Ig-like V-type domains span residues 25–122 and 140–239; these read KTFV…MNLG and PRRS…KSLS.

This Fowlpox virus (strain NVSL) (FPV) protein is Putative Ig-like V-type domain-containing protein FPV055.